The chain runs to 512 residues: Cytochrome P450 monooxygenase pbrB (512 aa).

Residues 6 to 29 (LSFPAAVGAAFGAFAIYVVARCIY) traverse the membrane as a helical segment. Position 452 (C452) interacts with heme.

It belongs to the cytochrome P450 family. Requires heme as cofactor.

It is found in the membrane. It functions in the pathway secondary metabolite biosynthesis; terpenoid biosynthesis. Its function is as follows. Cytochrome P450 monooxygenase; part of the gene cluster that mediates the biosynthesis of the sesquiterpenoid aspterric acid (AA), an inhibitor of dihydroxy-acid dehydratase (DHAD) effective as an herbicide. PbrB catalyzes the second step within the pathway and converts (-)-daucane produced by the terpene cyclase pbrA into an alpha-epoxy carboxylate intermediate which is further converted into the tricyclic aspterric acid by the cytochrome P450 monooxygenase pbrC. The polypeptide is Cytochrome P450 monooxygenase pbrB (Penicillium brasilianum).